Reading from the N-terminus, the 77-residue chain is U8-lycotoxin-Ls1f (77 aa).

The first 20 residues, 1–20, serve as a signal peptide directing secretion; the sequence is MKLIIFTGLVLFAIVSLIEV. Residues 21-26 constitute a propeptide that is removed on maturation; sequence QADNER.

The protein belongs to the neurotoxin 19 (CSTX) family. 08 (U8-Lctx) subfamily. Contains 4 disulfide bonds. As to expression, expressed by the venom gland.

It is found in the secreted. This is U8-lycotoxin-Ls1f from Lycosa singoriensis (Wolf spider).